The primary structure comprises 515 residues: ATP synthase subunit alpha (515 aa).

171–178 (GDRQTGKT) lines the ATP pocket.

Belongs to the ATPase alpha/beta chains family. As to quaternary structure, F-type ATPases have 2 components, CF(1) - the catalytic core - and CF(0) - the membrane proton channel. CF(1) has five subunits: alpha(3), beta(3), gamma(1), delta(1), epsilon(1). CF(0) has three main subunits: a(1), b(2) and c(9-12). The alpha and beta chains form an alternating ring which encloses part of the gamma chain. CF(1) is attached to CF(0) by a central stalk formed by the gamma and epsilon chains, while a peripheral stalk is formed by the delta and b chains.

The protein localises to the cell inner membrane. The enzyme catalyses ATP + H2O + 4 H(+)(in) = ADP + phosphate + 5 H(+)(out). Functionally, produces ATP from ADP in the presence of a proton gradient across the membrane. The alpha chain is a regulatory subunit. The protein is ATP synthase subunit alpha of Stenotrophomonas maltophilia (strain R551-3).